A 134-amino-acid chain; its full sequence is Profilin-2 (134 aa).

Cys-13 and Cys-118 form a disulfide bridge. An Involved in PIP2 interaction motif is present at residues 84 to 100 (AVIRGKKGSGGITIKKT). Thr-114 carries the post-translational modification Phosphothreonine.

Belongs to the profilin family. As to quaternary structure, occurs in many kinds of cells as a complex with monomeric actin in a 1:1 ratio. Post-translationally, phosphorylated by MAP kinases.

The protein localises to the cytoplasm. The protein resides in the cytoskeleton. Functionally, binds to actin and affects the structure of the cytoskeleton. At high concentrations, profilin prevents the polymerization of actin, whereas it enhances it at low concentrations. The protein is Profilin-2 of Olea europaea (Common olive).